The sequence spans 89 residues: Small ribosomal subunit protein bS20 (89 aa).

This sequence belongs to the bacterial ribosomal protein bS20 family.

Functionally, binds directly to 16S ribosomal RNA. This is Small ribosomal subunit protein bS20 from Helicobacter pylori (strain P12).